The primary structure comprises 318 residues: Methionyl-tRNA formyltransferase (318 aa).

A (6S)-5,6,7,8-tetrahydrofolate-binding site is contributed by 112–115 (SILP).

It belongs to the Fmt family.

It catalyses the reaction L-methionyl-tRNA(fMet) + (6R)-10-formyltetrahydrofolate = N-formyl-L-methionyl-tRNA(fMet) + (6S)-5,6,7,8-tetrahydrofolate + H(+). Its function is as follows. Attaches a formyl group to the free amino group of methionyl-tRNA(fMet). The formyl group appears to play a dual role in the initiator identity of N-formylmethionyl-tRNA by promoting its recognition by IF2 and preventing the misappropriation of this tRNA by the elongation apparatus. This chain is Methionyl-tRNA formyltransferase, found in Shewanella sp. (strain ANA-3).